The sequence spans 158 residues: Large ribosomal subunit protein bL21 (158 aa).

The tract at residues Ser-106–Asp-158 is disordered. Basic and acidic residues predominate over residues Pro-115–Thr-143. The segment covering Gln-146–Asp-158 has biased composition (low complexity).

The protein belongs to the bacterial ribosomal protein bL21 family. As to quaternary structure, part of the 50S ribosomal subunit. Contacts protein L20.

This protein binds to 23S rRNA in the presence of protein L20. This is Large ribosomal subunit protein bL21 from Bartonella tribocorum (strain CIP 105476 / IBS 506).